Reading from the N-terminus, the 89-residue chain is Small ribosomal subunit protein uS15 (89 aa).

Over residues 1 to 21 (MSIAAERKAEVIKTNARKDGD) the composition is skewed to basic and acidic residues. The interval 1-24 (MSIAAERKAEVIKTNARKDGDTGS) is disordered.

It belongs to the universal ribosomal protein uS15 family. Part of the 30S ribosomal subunit. Forms a bridge to the 50S subunit in the 70S ribosome, contacting the 23S rRNA.

In terms of biological role, one of the primary rRNA binding proteins, it binds directly to 16S rRNA where it helps nucleate assembly of the platform of the 30S subunit by binding and bridging several RNA helices of the 16S rRNA. Forms an intersubunit bridge (bridge B4) with the 23S rRNA of the 50S subunit in the ribosome. The protein is Small ribosomal subunit protein uS15 of Rhodopseudomonas palustris (strain BisA53).